Consider the following 265-residue polypeptide: Aquaporin-5 (265 aa).

Residues 1–12 (MKKEVCSAAFLK) are Cytoplasmic-facing. A helical transmembrane segment spans residues 13-33 (AVFAEFLATLIFVFFGLGSAL). The Extracellular portion of the chain corresponds to 34-39 (KWPSAM). Residues 40-60 (PSVLQISLAFGLAIGTMAQAL) traverse the membrane as a helical segment. Over 61–65 (GPVSG) the chain is Cytoplasmic. The discontinuously helical intramembrane region spans 66 to 74 (GHMNPAITL). The NPA 1 motif lies at 69-71 (NPA). Residues 75–87 (ALLVGNQISLLRA) lie on the Cytoplasmic side of the membrane. A helical transmembrane segment spans residues 88–108 (VFYLVAQLVGAIAGAAILYGL). At 109-126 (APYNARSNLAVNALNNNT) the chain is on the extracellular side. Asparagine 124 and asparagine 125 each carry an N-linked (GlcNAc...) asparagine glycan. Residues 127 to 147 (TAGQAVVAEMILTFQLALCVF) traverse the membrane as a helical segment. Residues 148–158 (SSTDSRRTSPV) are Cytoplasmic-facing. The helical transmembrane segment at 159–179 (GSPALSIGLSVTLGHLVGIYF) threads the bilayer. Threonine 180 is a topological domain (extracellular). The discontinuously helical intramembrane region spans 181–191 (GCSMNPARSFG). An NPA 2 motif is present at residues 185-187 (NPA). Residues 192 to 203 (PAVIMSRFSSAH) lie on the Extracellular side of the membrane. Residues 204–224 (WVFWVGPIVGAATAAIIYFYL) form a helical membrane-spanning segment. At 225–265 (LFPHSLSLSDRVAILKGTYEPDEDWEESQEERKKTMELTAH) the chain is on the cytoplasmic side.

It belongs to the MIP/aquaporin (TC 1.A.8) family. In terms of assembly, homotetramer; each monomer provides an independent water pore. Interacts with TRPV4; the interaction is probably indirect and regulates TRPV4 activation by hypotonicity.

It localises to the apical cell membrane. The protein localises to the cell membrane. Its subcellular location is the cytoplasmic vesicle membrane. It catalyses the reaction H2O(in) = H2O(out). Aquaporins form homotetrameric transmembrane channels, with each monomer independently mediating water transport across the plasma membrane along its osmotic gradient. Plays an important role in fluid secretion in salivary glands. Required for TRPV4 activation by hypotonicity. Together with TRPV4, controls regulatory volume decrease in salivary epithelial cells. Seems to play a redundant role in water transport in the eye, lung and in sweat glands. The sequence is that of Aquaporin-5 from Ovis aries (Sheep).